Consider the following 1381-residue polypeptide: DNA-directed RNA polymerase subunit beta (1381 aa).

It belongs to the RNA polymerase beta chain family. As to quaternary structure, the RNAP catalytic core consists of 2 alpha, 1 beta, 1 beta' and 1 omega subunit. When a sigma factor is associated with the core the holoenzyme is formed, which can initiate transcription.

It catalyses the reaction RNA(n) + a ribonucleoside 5'-triphosphate = RNA(n+1) + diphosphate. Functionally, DNA-dependent RNA polymerase catalyzes the transcription of DNA into RNA using the four ribonucleoside triphosphates as substrates. This Halorhodospira halophila (strain DSM 244 / SL1) (Ectothiorhodospira halophila (strain DSM 244 / SL1)) protein is DNA-directed RNA polymerase subunit beta.